Here is a 950-residue protein sequence, read N- to C-terminus: UvrABC system protein A (950 aa).

42–49 (GLSGSGKS) is an ATP binding site. The C4-type zinc finger occupies 262–289 (CPVCSYSLPELEPRLFSFNNPMGSCPTC). 2 ABC transporter domains span residues 319-596 (WDKR…EKSV) and 616-945 (VNPG…KYLK). An ATP-binding site is contributed by 649–656 (GVSGSGKS). Residues 748 to 774 (CEACQGDGVIKVEMHFLPDVYVPCEVC) form a C4-type zinc finger.

Belongs to the ABC transporter superfamily. UvrA family. Forms a heterotetramer with UvrB during the search for lesions.

The protein resides in the cytoplasm. The UvrABC repair system catalyzes the recognition and processing of DNA lesions. UvrA is an ATPase and a DNA-binding protein. A damage recognition complex composed of 2 UvrA and 2 UvrB subunits scans DNA for abnormalities. When the presence of a lesion has been verified by UvrB, the UvrA molecules dissociate. This is UvrABC system protein A from Neisseria gonorrhoeae.